The sequence spans 625 residues: MEGLDEKKPWGKLSRLLGAETDSSSELFLYKKEWTIGRKKACDLSFPGNKLVSGEHCKITVNEESGEVSLEDTSTNGTVINKLKVIRKQTYPLKNGDVIYVVYRKNEPEQNVAYLYKSLNQGQDSLHDPADTSGSEEAETQTLSSQDDQLSYEEPQPSTSTSSLFSTPTTSAIPGVQLESAEKSGESLGGHSSTSDASPAIRASIPKSNLSTQEQGSLGPPKKRIRTEDHWTTNKNFVPASCPIGASDESKTPSMKPDKMEETLTCIICQELLHDCVSLQPCMHTFCAACYSGWMERSSLCPTCRCPVERICKNHILNNLVEAYLIQHPEKCRSEEDRCSMDARNKITQDMLQPKVRRSFSDEEGSSEDLLELSDVDSESSDISQPYTVCRQCPGFVRHSMQPPPYPPPSDTETSRTQGDAPSTSTNFPTATQEYVCPSHGSHVICTCCFQPMPDRRAEREHNSHVAPQQCTICLEPFCHMYWGCNRMGCFGCLAPFCELNLGDKCLDGVLNNNNYESDILKNYLASRGLTWKDMLNESLAAVQRGVFMLPDYRINGTTVLCYFCGLRNFRILTYQYRQNIPASELPVTVTSRPNCYWGRNCRTQVKAHHAMKFNHICEQTRFKN.

One can recognise an FHA domain in the interval 34–85 (WTIGRKKACDLSFPGNKLVSGEHCKITVNEESGEVSLEDTSTNGTVINKLKV). 2 disordered regions span residues 123–171 (QDSL…PTTS) and 205–229 (IPKS…RTED). Positions 140 to 149 (TQTLSSQDDQ) are enriched in polar residues. The span at 158-171 (STSTSSLFSTPTTS) shows a compositional bias: low complexity. Positions 206–216 (PKSNLSTQEQG) are enriched in polar residues. Residues 266 to 305 (CIICQELLHDCVSLQPCMHTFCAACYSGWMERSSLCPTCR) form an RING-type zinc finger. Disordered regions lie at residues 350–386 (DMLQ…ISQP) and 401–427 (MQPP…TSTN). Positions 362 to 380 (DEEGSSEDLLELSDVDSES) are enriched in acidic residues. The span at 411–427 (DTETSRTQGDAPSTSTN) shows a compositional bias: polar residues. Residues 594-616 (PNCYWGRNCRTQVKAHHAMKFNH) form a PBZ-type zinc finger.

The protein belongs to the CHFR family.

It localises to the nucleus. Its subcellular location is the PML body. The enzyme catalyses S-ubiquitinyl-[E2 ubiquitin-conjugating enzyme]-L-cysteine + [acceptor protein]-L-lysine = [E2 ubiquitin-conjugating enzyme]-L-cysteine + N(6)-ubiquitinyl-[acceptor protein]-L-lysine.. It functions in the pathway protein modification; protein ubiquitination. Its function is as follows. E3 ubiquitin-protein ligase that functions in the antephase checkpoint by actively delaying passage into mitosis in response to microtubule poisons. Acts in early prophase before chromosome condensation, when the centrosome move apart from each other along the periphery of the nucleus. Probably involved in signaling the presence of mitotic stress caused by microtubule poisons by mediating the 'Lys-48'-linked ubiquitination of target proteins, leading to their degradation by the proteasome. May also promote the formation of 'Lys-63'-linked polyubiquitin chains and functions with the specific ubiquitin-conjugating ubc13-mms2 (ube2n-ube2v2) heterodimer. Substrates that are polyubiquitinated at 'Lys-63' are usually not targeted for degradation, but are rather involved in signaling cellular stress. In Xenopus laevis (African clawed frog), this protein is E3 ubiquitin-protein ligase CHFR (chfr).